We begin with the raw amino-acid sequence, 710 residues long: Protein CNGC15a (710 aa).

Transmembrane regions (helical) follow at residues 85-105 (IFLA…YLPV), 115-135 (SIGL…FYII), 174-194 (LWSD…AVIP), 207-226 (VVRL…IYPL), 248-268 (YLTL…LLSI), and 368-388 (AEIN…ALLI). Residue 474 to 559 (LFDQMDDRML…WALDPRPTAV (86 aa)) coordinates a nucleoside 3',5'-cyclic phosphate.

The protein belongs to the cyclic nucleotide-gated cation channel (TC 1.A.1.5) family. As to quaternary structure, interacts (via N-terminus) with DMI1 (via c-terminus). The Nod factor has no effect on this interaction, implying that the complex is maintained after activation. As to expression, expressed in roots, stems, leaves, flowers and pods.

It is found in the nucleus membrane. Cyclic nucleotide-gated channel involved in the establishment of both rhizobial and mycorrhizal associations. Required for full activation of nuclear-localized Ca(2+) oscillations by Nod and Myc factors. Simultaneous activation of the K(+)-permeable channel DMI1 and the Ca(2+) channel CNGC15 can give rise to sustained Ca(2+) oscillations. May function during fertilization in both female and male gametophytic Ca(2+) signaling. The polypeptide is Protein CNGC15a (Medicago truncatula (Barrel medic)).